A 335-amino-acid polypeptide reads, in one-letter code: Dolichyl-diphosphooligosaccharide--protein glycosyltransferase subunit MAGT1 (335 aa).

An N-terminal signal peptide occupies residues 1–29 (MAARWRFWCVSVTMVVALLIVCDVPSASA). At 30–184 (QRKKEMVLSE…DVNIRVIRPP (155 aa)) the chain is on the extracellular side. A Thioredoxin domain is found at 47–175 (WTNKRPVIRM…IARWIADRTD (129 aa)). Asn-71 is a glycosylation site (N-linked (GlcNAc...) asparagine). A disulfide bridge connects residues Cys-87 and Cys-90. A helical membrane pass occupies residues 185–205 (NYAGPLMLGLLLAVIGGLVYL). Over 206–209 (RRSN) the chain is Cytoplasmic. A helical membrane pass occupies residues 210–230 (MEFLFNKTGWAFAALCFVLAM). Over 231-270 (TSGQMWNHIRGPPYAHKNPHTGHVNYIHGSSQAQFVAETH) the chain is Extracellular. A helical membrane pass occupies residues 271–291 (IVLLFNGGVTLGMVLLCEAAT). At 292 to 300 (SDMDIGKRK) the chain is on the cytoplasmic side. The chain crosses the membrane as a helical span at residues 301–321 (IMCVAGIGLVVLFFSWMLSIF). The Extracellular portion of the chain corresponds to 322–335 (RSKYHGYPYSFLMS).

The protein belongs to the OST3/OST6 family. In terms of assembly, accessory component of the STT3B-containing form of the oligosaccharyltransferase (OST) complex. OST exists in two different complex forms which contain common core subunits RPN1, RPN2, OST48, OST4, DAD1 and TMEM258, either STT3A or STT3B as catalytic subunits, and form-specific accessory subunits. OST can form stable complexes with the Sec61 complex or with both the Sec61 and TRAP complexes. The association of TUSC3 or MAGT1 with the STT3B-containing complex seems to be mutually exclusvice. In terms of tissue distribution, ubiquitous. Expressed at very low levels in brain, lung and kidney.

Its subcellular location is the cell membrane. It is found in the endoplasmic reticulum. The protein resides in the endoplasmic reticulum membrane. Its pathway is protein modification; protein glycosylation. Accessory component of the STT3B-containing form of the N-oligosaccharyl transferase (OST) complex which catalyzes the transfer of a high mannose oligosaccharide from a lipid-linked oligosaccharide donor to an asparagine residue within an Asn-X-Ser/Thr consensus motif in nascent polypeptide chains. Involved in N-glycosylation of STT3B-dependent substrates. Specifically required for the glycosylation of a subset of acceptor sites that are near cysteine residues; in this function seems to act redundantly with TUSC3. In its oxidized form proposed to form transient mixed disulfides with a glycoprotein substrate to facilitate access of STT3B to the unmodified acceptor site. Also has oxidoreductase-independent functions in the STT3B-containing OST complex possibly involving substrate recognition. Could indirectly play a role in Mg(2+) transport in epithelial cells. This chain is Dolichyl-diphosphooligosaccharide--protein glycosyltransferase subunit MAGT1, found in Homo sapiens (Human).